The following is a 301-amino-acid chain: N-acetylmuramic acid 6-phosphate etherase (301 aa).

The region spanning 57-220 is the SIS domain; it reads ITEAFKKGGR…TTGAMIRSGK (164 aa). The active-site Proton donor is E85. E116 is an active-site residue.

Belongs to the GCKR-like family. MurNAc-6-P etherase subfamily. In terms of assembly, homodimer.

The catalysed reaction is N-acetyl-D-muramate 6-phosphate + H2O = N-acetyl-D-glucosamine 6-phosphate + (R)-lactate. It participates in amino-sugar metabolism; 1,6-anhydro-N-acetylmuramate degradation. Its pathway is amino-sugar metabolism; N-acetylmuramate degradation. The protein operates within cell wall biogenesis; peptidoglycan recycling. Functionally, specifically catalyzes the cleavage of the D-lactyl ether substituent of MurNAc 6-phosphate, producing GlcNAc 6-phosphate and D-lactate. Together with AnmK, is also required for the utilization of anhydro-N-acetylmuramic acid (anhMurNAc) either imported from the medium or derived from its own cell wall murein, and thus plays a role in cell wall recycling. The sequence is that of N-acetylmuramic acid 6-phosphate etherase from Photobacterium profundum (strain SS9).